The sequence spans 164 residues: Lipoprotein signal peptidase (164 aa).

3 consecutive transmembrane segments (helical) span residues 12–32 (WLWLVVVVLIIDLGSKYLILQ), 70–90 (WFFAGIAIGISVILAVMMYRL), and 102–122 (ALIIGGALGNLFDRLWHGFVV). Residues Asp-123 and Asp-141 contribute to the active site. Residues 137–157 (FNLADTAICVGAALIVLEGFL) form a helical membrane-spanning segment.

The protein belongs to the peptidase A8 family.

It localises to the cell inner membrane. The catalysed reaction is Release of signal peptides from bacterial membrane prolipoproteins. Hydrolyzes -Xaa-Yaa-Zaa-|-(S,diacylglyceryl)Cys-, in which Xaa is hydrophobic (preferably Leu), and Yaa (Ala or Ser) and Zaa (Gly or Ala) have small, neutral side chains.. The protein operates within protein modification; lipoprotein biosynthesis (signal peptide cleavage). Its function is as follows. This protein specifically catalyzes the removal of signal peptides from prolipoproteins. The sequence is that of Lipoprotein signal peptidase from Shigella boydii serotype 4 (strain Sb227).